Reading from the N-terminus, the 388-residue chain is Endoglucanase 3 (388 aa).

Positions 1–16 are cleaved as a signal peptide; the sequence is MKHSVLAGLFATGALA. In terms of domain architecture, CBM1 spans 17 to 52; that stretch reads QGGAWQQCGGVGFSGSTSCVSGYTCVYLNDWYSQCQ. Disulfide bonds link C24-C41 and C35-C51. The linker stretch occupies residues 53–91; the sequence is PQPTTLRTTTTPGATSTTRSAPAATSTTPAKGKFKWFGI. Residues 56–81 form a disordered region; that stretch reads TTLRTTTTPGATSTTRSAPAATSTTP. N92 and N155 each carry an N-linked (GlcNAc...) asparagine glycan. The interval 92–388 is catalytic; it reads NQSCAEFGKG…YNSLLKKYVP (297 aa). The Proton donor role is filled by E215. N-linked (GlcNAc...) asparagine glycosylation is present at N259. The Nucleophile role is filled by E322.

Belongs to the glycosyl hydrolase 5 (cellulase A) family.

It carries out the reaction Endohydrolysis of (1-&gt;4)-beta-D-glucosidic linkages in cellulose, lichenin and cereal beta-D-glucans.. This Humicola insolens (Soft-rot fungus) protein is Endoglucanase 3 (CMC3).